Here is a 162-residue protein sequence, read N- to C-terminus: Allophycocyanin subunit beta (162 aa).

N72 carries the post-translational modification N4-methylasparagine. C82 is a (2R,3E)-phycocyanobilin binding site.

Belongs to the phycobiliprotein family. In terms of assembly, heterohexamer of two alpha chains, one alpha-B chain and three beta chains. Post-translationally, contains one covalently linked phycocyanobilin chromophore. The chromophore is added by phycocyanobilin lyase CpcS 1.

Its subcellular location is the cellular thylakoid membrane. Functionally, light-harvesting photosynthetic bile pigment-protein from the phycobiliprotein complex. Allophycocyanin has a maximum absorption at approximately 650 to 653 nanometers. The polypeptide is Allophycocyanin subunit beta (apcB) (Nostoc sp. (strain PCC 7120 / SAG 25.82 / UTEX 2576)).